Here is a 246-residue protein sequence, read N- to C-terminus: tRNA pseudouridine synthase A (246 aa).

Catalysis depends on Asp52, which acts as the Nucleophile. Tyr112 is a binding site for substrate.

This sequence belongs to the tRNA pseudouridine synthase TruA family. In terms of assembly, homodimer.

The enzyme catalyses uridine(38/39/40) in tRNA = pseudouridine(38/39/40) in tRNA. Its function is as follows. Formation of pseudouridine at positions 38, 39 and 40 in the anticodon stem and loop of transfer RNAs. This chain is tRNA pseudouridine synthase A, found in Pelagibacter ubique (strain HTCC1062).